A 233-amino-acid polypeptide reads, in one-letter code: MDAGDAWGRSSSSSSSAAAAARRLQARYDLYMGFDDADAAGVEEVEARGGGEAYNCPFCGEDFDFVAFCCHVDDEHAVEAKSGVCPICATRVGVDLIGHLTMQHGSYFKMQRRRRVRKISSGSHSLLSLLRKDLRDGSLQSFLGGSSYVSNPPAAAPDPFLSSLICSLPVAEPSKDLHSDSSDNNFLLNKFPDDKTAERAEPSLSEKDQKERAQRSKFVRGLVLSTIFEDDNL.

The tract at residues 176 to 215 is disordered; it reads DLHSDSSDNNFLLNKFPDDKTAERAEPSLSEKDQKERAQR. A compositionally biased stretch (basic and acidic residues) spans 191–214; that stretch reads FPDDKTAERAEPSLSEKDQKERAQ.

The protein belongs to the Di19 family.

The chain is Protein DEHYDRATION-INDUCED 19 homolog 2 (DI19-2) from Oryza sativa subsp. japonica (Rice).